The chain runs to 387 residues: 3-ketoacyl-CoA thiolase (387 aa).

The active-site Acyl-thioester intermediate is the cysteine 91. Catalysis depends on proton acceptor residues histidine 343 and cysteine 373.

This sequence belongs to the thiolase-like superfamily. Thiolase family. Heterotetramer of two alpha chains (FadB) and two beta chains (FadA).

The protein resides in the cytoplasm. It carries out the reaction an acyl-CoA + acetyl-CoA = a 3-oxoacyl-CoA + CoA. It functions in the pathway lipid metabolism; fatty acid beta-oxidation. Its function is as follows. Catalyzes the final step of fatty acid oxidation in which acetyl-CoA is released and the CoA ester of a fatty acid two carbons shorter is formed. This is 3-ketoacyl-CoA thiolase from Escherichia fergusonii (strain ATCC 35469 / DSM 13698 / CCUG 18766 / IAM 14443 / JCM 21226 / LMG 7866 / NBRC 102419 / NCTC 12128 / CDC 0568-73).